The sequence spans 454 residues: DNA primase small subunit (454 aa).

Active-site residues include E66, D131, and D133. Residues D131 and D133 each coordinate Mg(2+). Positions 131 and 133 each coordinate Mn(2+). Position 131-133 (131-133) interacts with a ribonucleoside 5'-triphosphate; that stretch reads DID. Positions 143, 144, 150, and 153 each coordinate Zn(2+). The short motif at 143-153 is the Zinc knuckle motif element; sequence CCSKTNICEKC. Residue 182–188 coordinates a ribonucleoside 5'-triphosphate; that stretch reads SGRRGIH. Residue D333 participates in Mg(2+) binding. D333 serves as a coordination point for Mn(2+). Residue 342 to 345 participates in a ribonucleoside 5'-triphosphate binding; that stretch reads HLLK. Residues 385–420 form a disordered region; it reads DKNSQNDNGHGPTMETNTTENQKDNARGQSNKGHGF. Polar residues-rich tracts occupy residues 389–404 and 411–420; these read QNDN…NTTE and RGQSNKGHGF.

This sequence belongs to the eukaryotic-type primase small subunit family. Heterodimer of a catalytic subunit spp1/pri1 and a regulatory subunit spp2/pri2, also known as the DNA primase complex. Component of the alpha DNA polymerase complex (also known as the alpha DNA polymerase-primase complex) consisting of four subunits: the catalytic subunit pol1, the accessory subunit spb70/pol12, and the primase complex subunits spp1/pri1 and spp2/pri2 respectively. Mg(2+) is required as a cofactor. Mn(2+) serves as cofactor.

The protein resides in the nucleus. The enzyme catalyses ssDNA + n NTP = ssDNA/pppN(pN)n-1 hybrid + (n-1) diphosphate.. Its function is as follows. Catalytic subunit of the DNA primase complex and component of the DNA polymerase alpha complex (also known as the alpha DNA polymerase-primase complex - primosome/replisome) which play an essential role in the initiation of DNA synthesis. During the S phase of the cell cycle, the DNA polymerase alpha complex (composed of a catalytic subunit pol1, an accessory subunit spb70/pol12 and two primase subunits, the catalytic subunit spp1/pri1 and the regulatory subunit spp2/pri2) is recruited to DNA at the replicative forks. The primase subunit of the polymerase alpha complex initiates DNA synthesis by oligomerising short RNA primers on both leading and lagging strands. This Schizosaccharomyces pombe (strain 972 / ATCC 24843) (Fission yeast) protein is DNA primase small subunit.